The primary structure comprises 120 residues: Large ribosomal subunit protein bL17 (120 aa).

The protein belongs to the bacterial ribosomal protein bL17 family. Part of the 50S ribosomal subunit. Contacts protein L32.

This Geobacillus kaustophilus (strain HTA426) protein is Large ribosomal subunit protein bL17.